Consider the following 797-residue polypeptide: Cleavage factor two protein 2 (797 aa).

Disordered regions lie at residues 519-557 and 677-703; these read ENDSDDNALSNSNGKRKWSEINDGLQQKKEEEDEDEVPS and PSEEEDKKEEVEKKDGDKERNEEKKEE. The segment covering 684–703 has biased composition (basic and acidic residues); the sequence is KEEVEKKDGDKERNEEKKEE.

In terms of assembly, component of the cleavage and polyadenylation factor (CPF) complex, which is composed of cft1, cft2, ysh1, pta1, swd2, pfs2, dis2, yth1, ssu72, and fip1.

The protein resides in the nucleus. Functionally, RNA-binding component of the cleavage and polyadenylation factor (CPF) complex, which plays a key role in polyadenylation-dependent pre-mRNA 3'-end formation and cooperates with cleavage factors including the CFIA complex and NAB4/CFIB. May be involved in poly(A)-site recognition. May be involved in the association of the CPF, CPFIA and RNA polymerase II complexes. The chain is Cleavage factor two protein 2 (cft2) from Schizosaccharomyces pombe (strain 972 / ATCC 24843) (Fission yeast).